A 173-amino-acid chain; its full sequence is Crossover junction endodeoxyribonuclease RuvC (173 aa).

Residues Asp-8, Glu-67, and Asp-139 contribute to the active site. Residues Asp-8, Glu-67, and Asp-139 each coordinate Mg(2+).

The protein belongs to the RuvC family. In terms of assembly, homodimer which binds Holliday junction (HJ) DNA. The HJ becomes 2-fold symmetrical on binding to RuvC with unstacked arms; it has a different conformation from HJ DNA in complex with RuvA. In the full resolvosome a probable DNA-RuvA(4)-RuvB(12)-RuvC(2) complex forms which resolves the HJ. Mg(2+) serves as cofactor.

It localises to the cytoplasm. The catalysed reaction is Endonucleolytic cleavage at a junction such as a reciprocal single-stranded crossover between two homologous DNA duplexes (Holliday junction).. In terms of biological role, the RuvA-RuvB-RuvC complex processes Holliday junction (HJ) DNA during genetic recombination and DNA repair. Endonuclease that resolves HJ intermediates. Cleaves cruciform DNA by making single-stranded nicks across the HJ at symmetrical positions within the homologous arms, yielding a 5'-phosphate and a 3'-hydroxyl group; requires a central core of homology in the junction. The consensus cleavage sequence is 5'-(A/T)TT(C/G)-3'. Cleavage occurs on the 3'-side of the TT dinucleotide at the point of strand exchange. HJ branch migration catalyzed by RuvA-RuvB allows RuvC to scan DNA until it finds its consensus sequence, where it cleaves and resolves the cruciform DNA. The protein is Crossover junction endodeoxyribonuclease RuvC of Shewanella loihica (strain ATCC BAA-1088 / PV-4).